A 111-amino-acid polypeptide reads, in one-letter code: ATP-dependent Clp protease adapter protein ClpS (111 aa).

It belongs to the ClpS family. As to quaternary structure, binds to the N-terminal domain of the chaperone ClpA.

Functionally, involved in the modulation of the specificity of the ClpAP-mediated ATP-dependent protein degradation. This Legionella pneumophila (strain Corby) protein is ATP-dependent Clp protease adapter protein ClpS.